We begin with the raw amino-acid sequence, 265 residues long: MSSSCFCKHSEETPLSVLSPELQEQFSDPNHPANLICELCRLFYDNNWVTGTGGGISIRDVDGANPNLVYIAPSGVQKERIQPWEMFLVELPEEKILRTPNDIPKELTKSYKYKPSACTPLFMSCYTMRDAGACIHTHSQHAVMVTLFLEGKKEFEISHIEQIKALPKLALNENTGKIEKIGSMEYYDKLVIPIIENTPHEEDLTDSLQEAIKNYPGTSAVLVRRHGIYVWGETVWKAKVYNEAIDYLLELAVKMQQSGIPTVKQ.

Cys118 contacts substrate. His136 and His138 together coordinate Zn(2+). Glu161 acts as the Proton donor/acceptor in catalysis. His226 lines the Zn(2+) pocket.

It belongs to the aldolase class II family. MtnB subfamily. Requires Zn(2+) as cofactor.

It is found in the cytoplasm. It catalyses the reaction 5-(methylsulfanyl)-D-ribulose 1-phosphate = 5-methylsulfanyl-2,3-dioxopentyl phosphate + H2O. The protein operates within amino-acid biosynthesis; L-methionine biosynthesis via salvage pathway; L-methionine from S-methyl-5-thio-alpha-D-ribose 1-phosphate: step 2/6. Its function is as follows. Catalyzes the dehydration of methylthioribulose-1-phosphate (MTRu-1-P) into 2,3-diketo-5-methylthiopentyl-1-phosphate (DK-MTP-1-P). The polypeptide is Methylthioribulose-1-phosphate dehydratase (Scheffersomyces stipitis (strain ATCC 58785 / CBS 6054 / NBRC 10063 / NRRL Y-11545) (Yeast)).